The primary structure comprises 450 residues: Ceramide glucosyltransferase (450 aa).

Residues Met-1–Ser-8 lie on the Lumenal side of the membrane. Residues Leu-9–Gly-29 traverse the membrane as a helical segment. Residues Trp-30–Ala-337 are Cytoplasmic-facing. Residue Asp-96 is a short sequence motif, D1. Residue Asp-148 is a short sequence motif, D2. Asp-286 is a short sequence motif (D3). The active-site Proton acceptor is the Asp-286. The (Q/R)XXRW motif lies at Arg-323–Trp-327. A helical membrane pass occupies residues Ala-338–Ile-358. Over Ser-359–Leu-361 the chain is Lumenal. A helical membrane pass occupies residues Leu-362–Ile-382. At Ser-383–Lys-401 the chain is on the cytoplasmic side. A helical membrane pass occupies residues Val-402–Ala-422. The Lumenal segment spans residues Met-423–Asn-450.

Belongs to the glycosyltransferase 2 family.

It localises to the golgi apparatus membrane. It catalyses the reaction an N-acylsphing-4-enine + UDP-alpha-D-glucose = a beta-D-glucosyl-(1&lt;-&gt;1')-N-acylsphing-4-enine + UDP + H(+). Its pathway is lipid metabolism; sphingolipid metabolism. Its function is as follows. Catalyzes the final step in the biosynthesis of the membrane lipid glucosylceramide (GluCer), the transfer of glucose to ceramide. Glucosylceramides play important roles in growth, differentiation and pathogenicity. Essential factor in determining the success of fungal infection by regulating survival of yeast cells during the initial colonization of the host lung. This chain is Ceramide glucosyltransferase, found in Cryptococcus neoformans var. grubii serotype A (strain H99 / ATCC 208821 / CBS 10515 / FGSC 9487) (Filobasidiella neoformans var. grubii).